The sequence spans 374 residues: Arf-GAP with dual PH domain-containing protein 1 (374 aa).

The Arf-GAP domain occupies 7–126; sequence RAVLELLQRP…EFIYPEKQEP (120 aa). The C4-type zinc-finger motif lies at 21–44; sequence CADCGAPDPDWASYTLGVFICLSC. Position 87 is a phosphoserine; by PKC (Ser-87). PH domains follow at residues 129–230 and 252–356; these read AGYR…AARF and NYLK…KAVD. Lys-272 is subject to N6-acetyllysine. Thr-276 is subject to Phosphothreonine; by PKC.

Interacts with PRKCA, PRKCI and PRKCZ. Interacts with the N-terminal region of PRKD1. Phosphorylated by PRKCA, PRKCI, PRKCZ and PRKD1 in vitro. Expressed at highest levels in brain and at lower levels in peripheral blood leukocytes.

Its subcellular location is the nucleus. The protein localises to the cytoplasm. Its function is as follows. GTPase-activating protein for the ADP ribosylation factor family. Binds phosphatidylinositol 3,4,5-trisphosphate (PtdInsP3) and inositol 1,3,4,5-tetrakisphosphate (InsP4). Regulates the incorporation of CD63 and CD9 into multivesicular bodies. The sequence is that of Arf-GAP with dual PH domain-containing protein 1 (ADAP1) from Homo sapiens (Human).